Here is a 344-residue protein sequence, read N- to C-terminus: Neurotrimin (344 aa).

An N-terminal signal peptide occupies residues 1-33; that stretch reads MGVCGYLFLPWKCLVVVSLRLLFLVPTGVPVRS. 3 Ig-like C2-type domains span residues 39–126, 136–218, and 222–309; these read PKAM…PKTS, PKIV…VKVT, and PPYI…ASIM. N-linked (GlcNAc...) asparagine glycans are attached at residues asparagine 44, asparagine 70, and asparagine 152. Residues cysteine 57 and cysteine 115 are joined by a disulfide bond. 2 disulfide bridges follow: cysteine 157/cysteine 201 and cysteine 243/cysteine 295. Residues asparagine 284, asparagine 292, and asparagine 305 are each glycosylated (N-linked (GlcNAc...) asparagine). Asparagine 321 carries the GPI-anchor amidated asparagine; alternate lipid modification. Residue asparagine 321 is glycosylated (N-linked (GlcNAc...) asparagine; alternate). The propeptide at 322 to 344 is removed in mature form; sequence GTSRRAGCIWLLPLLVLHLLLKF.

This sequence belongs to the immunoglobulin superfamily. IgLON family.

The protein localises to the cell membrane. In terms of biological role, neural cell adhesion molecule. The polypeptide is Neurotrimin (Ntm) (Mus musculus (Mouse)).